The primary structure comprises 661 residues: Potassium voltage-gated channel subfamily KQT member 1 (661 aa).

Disordered regions lie at residues 1 to 29 (MAAA…ESAG) and 42 to 88 (ESGP…SLDP). Topologically, residues 1-119 (MAAASTPPRA…YNFLERPTGW (119 aa)) are cytoplasmic. Ser-27 carries the phosphoserine; by PKA modification. Residues 54 to 85 (VSPPSAPEPAPPASPASPAPPAADQGPQPPVS) are compositionally biased toward pro residues. A helical transmembrane segment spans residues 120-141 (KCFAYHFTVFLIVLVCLIFSVL). Over 142-152 (STIEQYATLAT) the chain is Extracellular. The chain crosses the membrane as a helical span at residues 153–175 (GTLFWMEIVLVVFFGTEYVVRLW). The Cytoplasmic portion of the chain corresponds to 176-191 (SAGCRSKYVGLWGRLR). Residues 192–217 (FARKPISIIDLIVVVASMVVLCVGSK) form a helical membrane-spanning segment. Residues 218–225 (GQVFATSA) lie on the Extracellular side of the membrane. The chain crosses the membrane as a helical; Voltage-sensor span at residues 226–241 (IRGIRFLQILRMLHVD). The tract at residues 237-245 (MLHVDRQGG) is interaction with KCNE3. Residues 242 to 259 (RQGGTWRLLGSVVFIHRQ) are Cytoplasmic-facing. Gln-243 is a binding site for a 1,2-diacyl-sn-glycero-3-phospho-(1D-myo-inositol-4,5-bisphosphate). A helical transmembrane segment spans residues 260–282 (ELITTLYIGFLGLIFSSYFVYLA). Topologically, residues 283 to 298 (EKDAVNESGRVEFGSY) are extracellular. An N-linked (GlcNAc...) asparagine glycan is attached at Asn-288. The pore-forming intramembrane region spans 299 to 319 (ADALWWGVVTVTTIGYGDKVP). Residues 320–321 (QT) are Extracellular-facing. Residues 322 to 347 (WVGKTIASCFSVFAISFFALPAGILG) form a helical membrane-spanning segment. Topologically, residues 348 to 661 (SGFALKVQQK…VPRRDPEEGS (314 aa)) are cytoplasmic. The tract at residues 369–381 (AAASLIQTAWRCY) is interaction with CALM. A phosphoserine mark is found at Ser-406 and Ser-408. Positions 514–528 (KVIRRMQYFVAKKKF) are interaction with CALM; calcium-dependent. The interval 534-571 (PYDVRDVIEQYSQGHLNLMVRIKELQRRLDQSIGKPSL) is interaction with KCNE1 C-terminus. Positions 584–620 (SNSIGARLNRVEDKVTQLDQRLVLIADMLQQLLALHQ) form a coiled coil. Residues 587-615 (IGARLNRVEDKVTQLDQRLVLIADMLQQL) are interaction with AKAP9. A C-terminal assembly domain (tetramerization) region spans residues 588–619 (GARLNRVEDKVTQLDQRLVLIADMLQQLLALH). A disordered region spans residues 624–661 (HGGAHPAQARDGDPADPELFLPTYEQLTVPRRDPEEGS).

Belongs to the potassium channel family. KQT (TC 1.A.1.15) subfamily. Kv7.1/KCNQ1 sub-subfamily. In terms of assembly, tetramer. Heterotetramer with KCNE1; targets to the membrane raft. Interacts (via C-terminus) with CALM; forms a heterooctameric structure (with 4:4 KCNQ1:CALM stoichiometry) in a calcium-independent manner. Interacts with AKAP9; targets protein kinase A (PKA) catalytic and regulatory subunits and protein phosphatase 1 (PP1) to the KCNQ1-KCNE1 complex, allowing PKA-mediated phosphorylation and increase of delayed rectifier potassium channel activity. Interacts with KCNE2; form a heterooligomer complex that targets to the membrane raft and leading to currents with an apparently instantaneous activation, a rapid deactivation process and a linear current-voltage relationship and decreases the amplitude of the outward current. Interacts with AP2M1; mediates estrogen-induced internalization via clathrin-coated vesicles. Interacts with NEDD4L; promotes internalization and decreases I(Ks) currents. Interacts with USP2; counteracts the NEDD4L-specific down-regulation of I(Ks) and restore plasma membrane localization. Heterotetramer with KCNQ5; has a voltage-gated potassium channel activity. Interacts with KCNE3; four KCNE3 molecules are bound to one KCNQ1 tetramer (4:4 KCNQ1:KCNE3 stoichiometry); alters membrane raft localization; affects KCNQ1 structure and gating properties. Interacts with KCNE4; impairs KCNQ1 localization in lipid rafts and inhibits voltage-gated potassium channel activity. Interacts with KCNE5; impairs KCNQ1 localization in lipid rafts and only conducts current upon strong and continued depolarization. Interacts with SLC5A3; forms coregulatory channel-transporter complexes that modulate Na(+)-coupled myo-inositol influx through the transporter. In terms of processing, phosphorylation at Ser-27 by PKA; increases delayed rectifier potassium channel activity of the KCNQ1-KCNE1 complex through a macromolecular complex that includes PKA, PP1, and the targeting protein AKAP9. Post-translationally, ubiquitinated by NEDD4L; promotes internalization. The ubiquitinylated form is internalized through a clathrin-mediated endocytosis by interacting with AP2M1 and is recycled back to the cell membrane via RAB4A and RAB11A. Deubiquitinated by USP2; counteracts the NEDD4L-specific down-regulation of I(Ks) and restores the membrane localization.

The protein localises to the cell membrane. It is found in the cytoplasmic vesicle membrane. It localises to the early endosome. Its subcellular location is the membrane raft. The protein resides in the endoplasmic reticulum. The protein localises to the basolateral cell membrane. It is found in the apical cell membrane. The enzyme catalyses K(+)(in) = K(+)(out). Its activity is regulated as follows. PIP2 molecule is essential to activate KCNQ channels by inducing the coupling of the voltage-sensing domain (VSD) and the pore-forming domain (PD). Upon channel activation, PIP2 disrupts the VSD-calmodulin/CALM interactions, causing the release of CALM from the VSD which triggers the opening of the gate. Calcium potentiates KCNQ1 channel current through calcium-bound CALM. Calcium-bound CALM competes with PIP2 to stabilize the channel open state. Functionally, pore-forming subunit of the voltage-gated potassium (Kv) channel involved in the regulation of cardiomyocyte excitability and important in normal development and functions of myocardium, inner ear, stomach and colon. Associates with KCNE beta subunits that modulates current kinetics. Induces a voltage-dependent by rapidly activating and slowly deactivating potassium-selective outward current. Also promotes a delayed voltage activated potassium current showing outward rectification characteristic. During beta-adrenergic receptor stimulation participates in cardiac repolarization by associating with KCNE1 to form the I(Ks) cardiac potassium current that increases the amplitude and slows down the activation kinetics of outward potassium current I(Ks). Muscarinic agonist oxotremorine-M strongly suppresses KCNQ1/KCNE1 current. When associated with KCNE3, forms the potassium channel that is important for cyclic AMP-stimulated intestinal secretion of chloride ions. This interaction with KCNE3 is reduced by 17beta-estradiol, resulting in the reduction of currents. During conditions of increased substrate load, maintains the driving force for proximal tubular and intestinal sodium ions absorption, gastric acid secretion, and cAMP-induced jejunal chloride ions secretion. Allows the provision of potassium ions to the luminal membrane of the secretory canaliculus in the resting state as well as during stimulated acid secretion. When associated with KCNE2, forms a heterooligomer complex leading to currents with an apparently instantaneous activation, a rapid deactivation process and a linear current-voltage relationship and decreases the amplitude of the outward current. When associated with KCNE4, inhibits voltage-gated potassium channel activity. When associated with KCNE5, this complex only conducts current upon strong and continued depolarization. Also forms a heterotetramer with KCNQ5 that has a voltage-gated potassium channel activity. Binds with phosphatidylinositol 4,5-bisphosphate. KCNQ1-KCNE2 channel associates with Na(+)-coupled myo-inositol symporter in the apical membrane of choroid plexus epithelium and regulates the myo-inositol gradient between blood and cerebrospinal fluid with an impact on neuron excitability. The protein is Potassium voltage-gated channel subfamily KQT member 1 of Oryctolagus cuniculus (Rabbit).